Consider the following 539-residue polypeptide: Cell division control protein 6 homolog (539 aa).

A disordered region spans residues 1 to 40; the sequence is MPAIAGPSSSPQKHVVGSRSESIGGVRSAEVNTSRKRKLI. Positions 35–38 match the Nuclear localization signal motif; it reads RKRK.

This sequence belongs to the CDC6/cdc18 family. Highly expressed in roots, flower buds and etiolated seedlings. Expressed in leaves and stems. Highly expressed in proliferating cells such as root meristems, leaf primordia and young growing leaves, as well as cells undergoing endoreduplication cycles.

It localises to the nucleus. Its function is as follows. May be involved in the initiation of DNA replication. May play a role in endoreduplication. Could act as one of the factors that contributes to maintain endoreduplication competence. The polypeptide is Cell division control protein 6 homolog (Arabidopsis thaliana (Mouse-ear cress)).